We begin with the raw amino-acid sequence, 370 residues long: A-type ATP synthase subunit C (370 aa).

Belongs to the V-ATPase V0D/AC39 subunit family. Has multiple subunits with at least A(3), B(3), C, D, E, F, H, I and proteolipid K(x).

It localises to the cell membrane. Its function is as follows. Component of the A-type ATP synthase that produces ATP from ADP in the presence of a proton gradient across the membrane. The sequence is that of A-type ATP synthase subunit C from Pyrococcus horikoshii (strain ATCC 700860 / DSM 12428 / JCM 9974 / NBRC 100139 / OT-3).